The following is a 506-amino-acid chain: Flap endonuclease 1 (506 aa).

The interval 1 to 106 (MGIKGLIPFL…KTLDKRRQKR (106 aa)) is N-domain. D34 provides a ligand contact to Mg(2+). Residues R47 and R72 each coordinate DNA. Mg(2+) contacts are provided by D88, E160, E162, D181, and D183. Positions 124–253 (SAKKLVGRTV…KTAYSLVKKY (130 aa)) are I-domain. Residue E160 coordinates DNA. Residues G231 and D233 each coordinate DNA. D233 lines the Mg(2+) pocket. An interaction with PCNA region spans residues 330 to 338 (IQTSLLSFL). Residues 338–347 (LTNPQPTNKS) are compositionally biased toward polar residues. The segment at 338 to 388 (LTNPQPTNKSKSLDEGPKQSSTEDYKVNTNPSTKGSNVYTTDTNSTKDTKG) is disordered. Over residues 348 to 363 (KSLDEGPKQSSTEDYK) the composition is skewed to basic and acidic residues. Over residues 364–381 (VNTNPSTKGSNVYTTDTN) the composition is skewed to polar residues.

It belongs to the XPG/RAD2 endonuclease family. FEN1 subfamily. Interacts with PCNA. Three molecules of FEN1 bind to one PCNA trimer with each molecule binding to one PCNA monomer. PCNA stimulates the nuclease activity without altering cleavage specificity. Mg(2+) serves as cofactor. In terms of processing, phosphorylated. Phosphorylation upon DNA damage induces relocalization to the nuclear plasma.

Its subcellular location is the nucleus. The protein localises to the nucleolus. It localises to the nucleoplasm. It is found in the mitochondrion. Structure-specific nuclease with 5'-flap endonuclease and 5'-3' exonuclease activities involved in DNA replication and repair. During DNA replication, cleaves the 5'-overhanging flap structure that is generated by displacement synthesis when DNA polymerase encounters the 5'-end of a downstream Okazaki fragment. It enters the flap from the 5'-end and then tracks to cleave the flap base, leaving a nick for ligation. Also involved in the long patch base excision repair (LP-BER) pathway, by cleaving within the apurinic/apyrimidinic (AP) site-terminated flap. Acts as a genome stabilization factor that prevents flaps from equilibrating into structures that lead to duplications and deletions. Also possesses 5'-3' exonuclease activity on nicked or gapped double-stranded DNA, and exhibits RNase H activity. Also involved in replication and repair of rDNA and in repairing mitochondrial DNA. The sequence is that of Flap endonuclease 1 from Theileria annulata.